The sequence spans 209 residues: Ribonuclease HII (209 aa).

The region spanning 6-209 (SLEAGIDEAG…IKRMTNSRLF (204 aa)) is the RNase H type-2 domain. Asp12, Glu13, and Asp108 together coordinate a divalent metal cation.

Belongs to the RNase HII family. Requires Mn(2+) as cofactor. It depends on Mg(2+) as a cofactor.

The protein resides in the cytoplasm. The catalysed reaction is Endonucleolytic cleavage to 5'-phosphomonoester.. In terms of biological role, endonuclease that specifically degrades the RNA of RNA-DNA hybrids. The protein is Ribonuclease HII of Caldivirga maquilingensis (strain ATCC 700844 / DSM 13496 / JCM 10307 / IC-167).